The chain runs to 494 residues: UDP-N-acetylmuramoyl-L-alanyl-D-glutamate--L-lysine ligase (494 aa).

S30 serves as a coordination point for UDP-N-acetyl-alpha-D-muramoyl-L-alanyl-D-glutamate. Residue 110–116 (GTNGKTS) coordinates ATP. UDP-N-acetyl-alpha-D-muramoyl-L-alanyl-D-glutamate-binding positions include 152 to 153 (TT), S179, and R187. K219 carries the post-translational modification N6-carboxylysine. The L-lysine recognition motif motif lies at 406 to 409 (DNPA).

This sequence belongs to the MurCDEF family. MurE subfamily. In terms of processing, carboxylation is probably crucial for Mg(2+) binding and, consequently, for the gamma-phosphate positioning of ATP.

It is found in the cytoplasm. It carries out the reaction UDP-N-acetyl-alpha-D-muramoyl-L-alanyl-D-glutamate + L-lysine + ATP = UDP-N-acetyl-alpha-D-muramoyl-L-alanyl-gamma-D-glutamyl-L-lysine + ADP + phosphate + H(+). It participates in cell wall biogenesis; peptidoglycan biosynthesis. In terms of biological role, catalyzes the addition of L-lysine to the nucleotide precursor UDP-N-acetylmuramoyl-L-alanyl-D-glutamate (UMAG) in the biosynthesis of bacterial cell-wall peptidoglycan. This chain is UDP-N-acetylmuramoyl-L-alanyl-D-glutamate--L-lysine ligase, found in Staphylococcus aureus (strain bovine RF122 / ET3-1).